An 862-amino-acid polypeptide reads, in one-letter code: Interleukin-12 receptor subunit beta-2 (862 aa).

The N-terminal stretch at 1–23 (MAHTFRGCSLAFMFIITWLLIKA) is a signal peptide. Over 24 to 622 (KIDACKRGDV…REFCLQGKAN (599 aa)) the chain is Extracellular. N-linked (GlcNAc...) asparagine glycans are attached at residues Asn-48, Asn-129, Asn-166, Asn-195, and Asn-271. Fibronectin type-III domains lie at 126–221 (QPQN…FLDI), 226–319 (PPWD…TPEE), 320–419 (EPTG…LCEA), 423–520 (APRQ…KHKA), and 521–620 (PLSG…LQGK). The WSXWS motif signature appears at 305-309 (WSDWS). 3 N-linked (GlcNAc...) asparagine glycosylation sites follow: Asn-347, Asn-376, and Asn-480. A helical membrane pass occupies residues 623 to 643 (WMAFVAPSICIAIIMVGIFST). The Cytoplasmic segment spans residues 644–862 (HYFQQKVFVL…LKMRCDSLML (219 aa)). Positions 662–670 (CSREIPDPA) match the Box 1 motif motif. The segment at 725–755 (NWPQREKGIQGHQASEKDMMHSASSPPPPRA) is disordered. Residues 728–744 (QREKGIQGHQASEKDMM) show a composition bias toward basic and acidic residues. The segment at 796–801 (THDGYL) is required for STAT4 binding. Tyr-800 bears the Phosphotyrosine mark.

It belongs to the type I cytokine receptor family. Type 2 subfamily. In terms of assembly, heterodimer/heterooligomer; disulfide-linked. The functional high affinity IL12 receptor is composed of I12RB1 and IL12RB2. Il12RB2 binds JAK2 (via its N-terminal) through a membrane-proximal region of the cytoplasmic domain. Interaction, in vitro and in vivo, with SOCS3 (via its SH2 domain) inhibits the STAT4-mediated activation. Binds STAT4 through a membrane-distal C-terminal region. On IL12 binding, phosphorylated on C-terminal tyrosine residues by JAK2. Phosphorylation on Tyr-800 is required for STAT4 binding and activation, and for SOCS3 binding. As to expression, isoform 2 is expressed at similar levels in both naive and activated T-cells.

It is found in the membrane. Functionally, receptor for interleukin-12. This subunit is the signaling component coupling to the JAK2/STAT4 pathway. Promotes the proliferation of T-cells as well as NK cells. Induces the promotion of T-cells towards the Th1 phenotype by strongly enhancing IFN-gamma production. The sequence is that of Interleukin-12 receptor subunit beta-2 (IL12RB2) from Homo sapiens (Human).